Here is a 361-residue protein sequence, read N- to C-terminus: Serine/threonine-protein kinase SAPK9 (361 aa).

Positions 22–278 (YELVKEIGSG…MPEIKNHPWF (257 aa)) constitute a Protein kinase domain. ATP contacts are provided by residues 28–36 (IGSGNFGVA) and lysine 51. Residue aspartate 141 is the Proton acceptor of the active site.

The protein belongs to the protein kinase superfamily. Ser/Thr protein kinase family. In terms of assembly, interacts with BZIP46. In terms of processing, may be phosphorylated. As to expression, expressed in leaf sheaths and roots. Expressed in shoots of young seedlings.

The protein localises to the cytoplasm. It localises to the nucleus. The enzyme catalyses L-seryl-[protein] + ATP = O-phospho-L-seryl-[protein] + ADP + H(+). It catalyses the reaction L-threonyl-[protein] + ATP = O-phospho-L-threonyl-[protein] + ADP + H(+). Activated by hyperosmotic stress and abscisic acid (ABA). May play a role in signal transduction of hyperosmotic response. Can phosphorylate BZIP46 in vitro. In Oryza sativa subsp. japonica (Rice), this protein is Serine/threonine-protein kinase SAPK9 (SAPK9).